The primary structure comprises 406 residues: UPF0761 membrane protein NMB0524 (406 aa).

Transmembrane regions (helical) follow at residues 43–63 (LLALVPVLTVMVAVASIFPVF), 100–120 (LTAIGSVMLVVTSLMLIRTID), 139–159 (FLVYWALLTFGPLSLGVGISF), 176–196 (WSGALRTAATLTFMTLLLWGL), 210–230 (AFVGALATAFCLETARSLFTW), and 248–268 (VPFFLLWLNLLWTLVLGGAVL).

It belongs to the UPF0761 family.

It localises to the cell inner membrane. The chain is UPF0761 membrane protein NMB0524 from Neisseria meningitidis serogroup B (strain ATCC BAA-335 / MC58).